The following is a 1135-amino-acid chain: Potassium channel subfamily T member 2 (1135 aa).

The Cytoplasmic segment spans residues M1–R63. A helical transmembrane segment spans residues L64–E84. The Extracellular portion of the chain corresponds to K85–S101. A helical transmembrane segment spans residues L102–L122. Residues G123–R137 lie on the Cytoplasmic side of the membrane. Residues I138–T158 form a helical membrane-spanning segment. Residues L159 to V164 are Extracellular-facing. Residues P165 to H185 form a helical membrane-spanning segment. Residues R186–Q198 lie on the Cytoplasmic side of the membrane. The chain crosses the membrane as a helical span at residues V199–H219. Over L220–N228 the chain is Extracellular. The segment at residues L229–T249 is an intramembrane region (pore-forming). Residues P250 to K256 lie on the Extracellular side of the membrane. Residues L257–L277 traverse the membrane as a helical segment. The Cytoplasmic portion of the chain corresponds to A278–L1135. RCK N-terminal domains lie at E299 to V435 and N718 to L858. 2 disordered regions span residues D982–I1036 and P1111–L1135. Residues L1010–G1030 show a composition bias toward basic residues. Positions P1111–C1122 are enriched in polar residues.

Belongs to the potassium channel family. Calcium-activated (TC 1.A.1.3) subfamily. KCa4.2/KCNT2 sub-subfamily. Homotetramer. Forms heteromeric channels with KCNT1. These heterodimer channels differ from the homomers in their unitary conductance, kinetic behavior, subcellular localization, and response to activation of protein kinase C. Phosphorylated by protein kinase C. Phosphorylation of the C-terminal domain inhibits channel activity. Within the dorsal root ganglia (DRGs), exclusively expressed in small-sized and medium-sized calcitonin gene-related peptide (CGRP)-containing DRG neurons.

It is found in the cell membrane. The catalysed reaction is K(+)(in) = K(+)(out). Are normally in a closed state unless activated by an increase in intracellular Na(+) and Cl(-). Inhibited upon stimulation of G-protein coupled receptors, such as CHRM1 and GRM1. There is conflicting data about the effect of ATP on KNCT2 channels activity. Intracellular ATP was initially report to inhibit the channel activity. However, others studies conclude that KNCT2 channels are not inhibited by intracellular ATP. Functionally, sodium-activated and chloride-activated potassium channel. Produces rapidly activating outward rectifier K(+) currents. Contributes to regulate neuronal excitability. The protein is Potassium channel subfamily T member 2 (Kcnt2) of Mus musculus (Mouse).